The primary structure comprises 76 residues: Protein CASC2, isoforms 1/2 (76 aa).

The disordered stretch occupies residues 1–20 (MAGTRGLMLLGPGPVAGPRD).

This chain is Protein CASC2, isoforms 1/2 (CASC2), found in Homo sapiens (Human).